Consider the following 152-residue polypeptide: DNA-binding transcriptional activator DecR (152 aa).

The HTH asnC-type domain maps to 2-63 (LDKIDRKLLA…LLDPEKIGLG (62 aa)). Residues 21–40 (LQALAEAVNLTTTPCWKRLK) constitute a DNA-binding region (H-T-H motif).

Functionally, plays a role in L-cysteine detoxification. Binds to the dlsT(yhaO)-yhaM operon promoter in the presence but not absence of L-cysteine; activates transcription from the dlsT(yhaO)-yhaM operon. This chain is DNA-binding transcriptional activator DecR (decR), found in Escherichia coli O157:H7.